The following is a 431-amino-acid chain: Glutamate-1-semialdehyde 2,1-aminomutase (431 aa).

The residue at position 269 (K269) is an N6-(pyridoxal phosphate)lysine.

The protein belongs to the class-III pyridoxal-phosphate-dependent aminotransferase family. HemL subfamily. In terms of assembly, homodimer. Requires pyridoxal 5'-phosphate as cofactor.

Its subcellular location is the cytoplasm. The enzyme catalyses (S)-4-amino-5-oxopentanoate = 5-aminolevulinate. Its pathway is porphyrin-containing compound metabolism; protoporphyrin-IX biosynthesis; 5-aminolevulinate from L-glutamyl-tRNA(Glu): step 2/2. The polypeptide is Glutamate-1-semialdehyde 2,1-aminomutase (Francisella tularensis subsp. tularensis (strain WY96-3418)).